A 29-amino-acid chain; its full sequence is Inorganic pyrophosphatase (29 aa).

The protein localises to the periplasm. The enzyme catalyses diphosphate + H2O = 2 phosphate + H(+). Inorganic pyrophosphatase is an essential enzyme for the activation of sulfate by sulfate reducing bacteria. This is a high activity pyrophosphatase. The protein is Inorganic pyrophosphatase of Nitratidesulfovibrio vulgaris (strain ATCC 29579 / DSM 644 / CCUG 34227 / NCIMB 8303 / VKM B-1760 / Hildenborough) (Desulfovibrio vulgaris).